The sequence spans 63 residues: Large ribosomal subunit protein bL33m (63 aa).

This sequence belongs to the bacterial ribosomal protein bL33 family.

The protein localises to the mitochondrion. This is Large ribosomal subunit protein bL33m (mrpl33) from Dictyostelium discoideum (Social amoeba).